A 45-amino-acid polypeptide reads, in one-letter code: Caltrin-like protein 1 (45 aa).

Residues Asp8–Phe45 enclose the Kazal-like domain. Asn13 and Asn41 each carry an N-linked (GlcNAc...) asparagine glycan.

In terms of processing, glycosylated.

It localises to the secreted. In terms of biological role, inhibits calcium transport into spermatozoa. In Cavia porcellus (Guinea pig), this protein is Caltrin-like protein 1.